A 706-amino-acid chain; its full sequence is Polyribonucleotide nucleotidyltransferase (706 aa).

Mg(2+)-binding residues include Asp487 and Asp493. Residues 553–612 enclose the KH domain; the sequence is PRLFTMKISQDKIRDVIGKGGETIRSITAETGTEINIAEDGTITIAATTQEAGDAAKKRI. An S1 motif domain is found at 622–692; it reads GKVYEGTVVK…DRGRVRLSIK (71 aa).

The protein belongs to the polyribonucleotide nucleotidyltransferase family. Mg(2+) serves as cofactor.

Its subcellular location is the cytoplasm. The enzyme catalyses RNA(n+1) + phosphate = RNA(n) + a ribonucleoside 5'-diphosphate. Its function is as follows. Involved in mRNA degradation. Catalyzes the phosphorolysis of single-stranded polyribonucleotides processively in the 3'- to 5'-direction. This chain is Polyribonucleotide nucleotidyltransferase, found in Neisseria gonorrhoeae (strain ATCC 700825 / FA 1090).